The chain runs to 447 residues: Rab GDP dissociation inhibitor alpha (447 aa).

Position 427 is a phosphoserine (S427).

Belongs to the Rab GDI family. In terms of assembly, interacts with RHOH. Interacts with the non-phosphorylated forms of RAB1A, RAB3A, RAB5A, RAB5B, RAB5C, RAB8A, RAB8B, RAB12, RAB35, and RAB43. Interacts with RAB10. In terms of tissue distribution, high expression in brain, lower in other tissues.

Its subcellular location is the cytoplasm. The protein resides in the golgi apparatus. It is found in the trans-Golgi network. Functionally, regulates the GDP/GTP exchange reaction of most Rab proteins by inhibiting the dissociation of GDP from them, and the subsequent binding of GTP to them. Promotes the dissociation of GDP-bound Rab proteins from the membrane and inhibits their activation. Promotes the dissociation of RAB1A, RAB3A, RAB5A and RAB10 from membranes. This is Rab GDP dissociation inhibitor alpha (Gdi1) from Mus musculus (Mouse).